The chain runs to 397 residues: Acetate kinase (397 aa).

Residue N7 coordinates Mg(2+). Residue K14 participates in ATP binding. R91 is a binding site for substrate. D148 serves as the catalytic Proton donor/acceptor. ATP is bound by residues 208 to 212 (HLGNG), 283 to 285 (DLR), and 331 to 335 (GVGEN). E384 lines the Mg(2+) pocket.

It belongs to the acetokinase family. Homodimer. Mg(2+) is required as a cofactor. The cofactor is Mn(2+).

The protein localises to the cytoplasm. The enzyme catalyses acetate + ATP = acetyl phosphate + ADP. The protein operates within metabolic intermediate biosynthesis; acetyl-CoA biosynthesis; acetyl-CoA from acetate: step 1/2. Catalyzes the formation of acetyl phosphate from acetate and ATP. Can also catalyze the reverse reaction. The polypeptide is Acetate kinase (Syntrophomonas wolfei subsp. wolfei (strain DSM 2245B / Goettingen)).